A 438-amino-acid chain; its full sequence is GTPase Der (438 aa).

2 EngA-type G domains span residues 4-168 (PVVA…DDNS) and 177-352 (TKVC…NNYS). Residues 10-17 (GRANVGKS), 57-61 (DTGGL), 120-123 (NKID), 183-190 (GKPNVGKS), 230-234 (DTAGL), and 295-298 (NKWD) contribute to the GTP site. The KH-like domain maps to 353–437 (MRISTGVLND…PLQFEFKTRG (85 aa)).

It belongs to the TRAFAC class TrmE-Era-EngA-EngB-Septin-like GTPase superfamily. EngA (Der) GTPase family. In terms of assembly, associates with the 50S ribosomal subunit.

GTPase that plays an essential role in the late steps of ribosome biogenesis. This chain is GTPase Der, found in Finegoldia magna (strain ATCC 29328 / DSM 20472 / WAL 2508) (Peptostreptococcus magnus).